The sequence spans 314 residues: Protein translocase subunit SecF (314 aa).

A run of 6 helical transmembrane segments spans residues 17–37, 137–157, 158–178, 188–210, 250–270, and 272–292; these read AVAV…TRGL, QGTY…WWRY, ELNF…ITLG, SLPV…IVVF, TLIV…GFAF, and LLVG…LLLV.

This sequence belongs to the SecD/SecF family. SecF subfamily. As to quaternary structure, forms a complex with SecD. Part of the essential Sec protein translocation apparatus which comprises SecA, SecYEG and auxiliary proteins SecDF. Other proteins may also be involved.

Its subcellular location is the cell inner membrane. Functionally, part of the Sec protein translocase complex. Interacts with the SecYEG preprotein conducting channel. SecDF uses the proton motive force (PMF) to complete protein translocation after the ATP-dependent function of SecA. The chain is Protein translocase subunit SecF from Desulfurispirillum indicum (strain ATCC BAA-1389 / DSM 22839 / S5).